The following is a 1028-amino-acid chain: Contactin-3 (1028 aa).

A signal peptide spans 1 to 19; the sequence is MMLSWKQLILLSFIGCLAG. 6 Ig-like C2-type domains span residues 26-117, 122-208, 227-313, 318-402, 408-497, and 499-593; these read PVFV…AKLQ, ENFK…ARVL, PKIE…GRLT, PYWV…AELK, PDFS…LVVT, and PTRI…AELI. 5 cysteine pairs are disulfide-bonded: Cys50–Cys100, Cys144–Cys196, Cys249–Cys297, Cys339–Cys386, and Cys431–Cys479. Residues Asn65 and Asn193 are each glycosylated (N-linked (GlcNAc...) asparagine). Asn377, Asn468, Asn489, and Asn538 each carry an N-linked (GlcNAc...) asparagine glycan. Cys521 and Cys577 are joined by a disulfide. Fibronectin type-III domains lie at 600–698, 703–800, 805–901, and 902–998; these read PPEN…TEEA, APSE…SAEE, APSH…TKKT, and PPSQ…TSMD. Positions 684–714 are disordered; sequence GEPSLPSEKVRTEEAAPEVAPSEVSGGGGSR. Residues Asn765, Asn860, Asn895, Asn913, Asn931, and Asn956 are each glycosylated (N-linked (GlcNAc...) asparagine). A lipid anchor (GPI-anchor amidated serine) is attached at Ser1002. Positions 1003 to 1028 are cleaved as a propeptide — removed in mature form; sequence TSAISDIHPVSGYISVLLFFIVNALW.

Belongs to the immunoglobulin superfamily. Contactin family. Interacts with PTPRG. In terms of tissue distribution, specifically expressed in brain. Not expressed in peripheral tissues such as heart, lung, liver, spleen, kidney and skeletal muscle. In brain, it is restricted to subsets of neurons such as Purkinje cells of the cerebellum, granule cells of the dentate gyrus, and neurons in the superficial layers of the cerebral cortex.

The protein localises to the cell membrane. In terms of biological role, contactins mediate cell surface interactions during nervous system development. Has some neurite outgrowth-promoting activity. The chain is Contactin-3 (Cntn3) from Rattus norvegicus (Rat).